The chain runs to 302 residues: Putative F-box protein At1g32420 (302 aa).

Residues 1–10 (MKRGNEENNH) are compositionally biased toward basic and acidic residues. The segment at 1 to 27 (MKRGNEENNHKTSSSSSTQRLSRRKIS) is disordered. The F-box domain occupies 31–78 (KSGNVNIPLDLTVEILKKLPAKSLLRFQCVSKQWLSIISSRRDFIDSI).

The polypeptide is Putative F-box protein At1g32420 (Arabidopsis thaliana (Mouse-ear cress)).